The sequence spans 126 residues: 5-hydroxyisourate hydrolase (126 aa).

Substrate-binding residues include His16, Arg54, and Tyr123.

This sequence belongs to the transthyretin family. 5-hydroxyisourate hydrolase subfamily. Homotetramer.

The catalysed reaction is 5-hydroxyisourate + H2O = 5-hydroxy-2-oxo-4-ureido-2,5-dihydro-1H-imidazole-5-carboxylate + H(+). In terms of biological role, catalyzes the hydrolysis of 5-hydroxyisourate (HIU) to 2-oxo-4-hydroxy-4-carboxy-5-ureidoimidazoline (OHCU). This Pseudomonas aeruginosa (strain ATCC 15692 / DSM 22644 / CIP 104116 / JCM 14847 / LMG 12228 / 1C / PRS 101 / PAO1) protein is 5-hydroxyisourate hydrolase.